Reading from the N-terminus, the 314-residue chain is Probable cell division protein WhiA (314 aa).

A DNA-binding region (H-T-H motif) is located at residues 274 to 308 (SLKELGEMISTGPISKSGVNHRLRKLNELADKIRS).

This sequence belongs to the WhiA family.

Its function is as follows. Involved in cell division and chromosome segregation. The protein is Probable cell division protein WhiA of Staphylococcus haemolyticus (strain JCSC1435).